A 77-amino-acid chain; its full sequence is Conotoxin ArMKLT2-022 (77 aa).

The first 22 residues, 1–22, serve as a signal peptide directing secretion; it reads MKLTCVLIVAVLFLTACQLIAA. Residues 23-46 constitute a propeptide that is removed on maturation; it reads DDSRDLKRFSRRKMRDGMLNTKNT. Q49 is modified (pyrrolidone carboxylic acid). 3 disulfides stabilise this stretch: C50/C65, C57/C68, and C64/C73.

The protein belongs to the conotoxin O1 superfamily. Expressed by the venom duct.

It localises to the secreted. In Conus arenatus (Sand-dusted cone), this protein is Conotoxin ArMKLT2-022.